Here is a 307-residue protein sequence, read N- to C-terminus: UDP-3-O-acyl-N-acetylglucosamine deacetylase (307 aa).

His-78, His-241, and Asp-245 together coordinate Zn(2+). The Proton donor role is filled by His-268.

This sequence belongs to the LpxC family. Zn(2+) serves as cofactor.

It catalyses the reaction a UDP-3-O-[(3R)-3-hydroxyacyl]-N-acetyl-alpha-D-glucosamine + H2O = a UDP-3-O-[(3R)-3-hydroxyacyl]-alpha-D-glucosamine + acetate. It participates in glycolipid biosynthesis; lipid IV(A) biosynthesis; lipid IV(A) from (3R)-3-hydroxytetradecanoyl-[acyl-carrier-protein] and UDP-N-acetyl-alpha-D-glucosamine: step 2/6. Its function is as follows. Catalyzes the hydrolysis of UDP-3-O-myristoyl-N-acetylglucosamine to form UDP-3-O-myristoylglucosamine and acetate, the committed step in lipid A biosynthesis. This chain is UDP-3-O-acyl-N-acetylglucosamine deacetylase, found in Bordetella avium (strain 197N).